Consider the following 463-residue polypeptide: L-seryl-tRNA(Sec) selenium transferase (463 aa).

K295 is modified (N6-(pyridoxal phosphate)lysine).

This sequence belongs to the SelA family. In terms of assembly, homodecamer; pentamer of dimers. Binds only one seryl-tRNA(Sec) per dimer. It depends on pyridoxal 5'-phosphate as a cofactor.

The protein resides in the cytoplasm. The catalysed reaction is L-seryl-tRNA(Sec) + selenophosphate + H(+) = L-selenocysteinyl-tRNA(Sec) + phosphate. Its pathway is aminoacyl-tRNA biosynthesis; selenocysteinyl-tRNA(Sec) biosynthesis; selenocysteinyl-tRNA(Sec) from L-seryl-tRNA(Sec) (bacterial route): step 1/1. Functionally, converts seryl-tRNA(Sec) to selenocysteinyl-tRNA(Sec) required for selenoprotein biosynthesis. In Salmonella paratyphi B (strain ATCC BAA-1250 / SPB7), this protein is L-seryl-tRNA(Sec) selenium transferase.